The primary structure comprises 929 residues: MTELSAADPAFVQAADALAKTYDPAGTESRWQCAWEESGVFHPDPQAAGEPFSVVIPPPNVTGSLHMGHAFNTALIDTIVRFQRLQGKNVLCLPGTDHASIAVQTILEKQLKAEAISRYDLGREAFLERAWAWKEESGGRIVDQLRRLGYSVDWQRQRFTLDEGLSAAVREAFVRLHEQGLIYRGEYLVNWCPASGSAVSDLEVEMKEVDGHLWHLRYPLTGGPAADGTTHLEVATTRPETMLGDVAVAVNPADERYRHLVGQTLILPLLGREIPVIADDHVDQDFGTGCVKVTPAHDPNDFAIGRRHDLPQITVMNKNGSMNGHAGRFEGLDRFEARKAVVAALQEEGLLVKVEPHRHSVPYSDRGKVPVEPLLSTQWFVRMEPLAARCHECLDHGAPRFVPNRWQKVYRDWLTEIRDWCISRQLWWGHRIPAWFVVSETDDQLTDATPYLVARSEEEAWQQARDQFGEAVVIQQDEDVLDTWFSSGLWPFSTMGWPDQESADLECWYPTSTLVTGFDIIFFWVARMTMMAGAFTGRMPFADVYIHGLVRDEQNRKMSKSAGNGIDPLLLIERYGTDALRFALVREVAGAGQDIRLDYDRKSDTSATVEAARNFANKLWNATRFALMNLGGETPASLGEPDPASLQLADRWILSRLARMNRDVVERYDSYRLGEAAKCLYEFAWNDICDWYLELSKRRLHPGEDASGEVLADQCTARQVLAKVLADLLVMLHPLMPHLSEELWHGLTGAPKDTFLALQSWPASNKSFLDDALELSFTELIEAIRVVRNLRAVAGLKPAQTVPVQFITGRPELAALLEQATADITALTRAESVVVATSADLTQRCLAGVSGELQVLLPIDGLVDLDALRGRLEKDLAKAEKEIAGLAGRLANPNFAIKAPPNVVEECQSNLAEAEAQAELARQRLSDLG.

The 'HIGH' region signature appears at 59–69 (PNVTGSLHMGH). The short motif at 557–561 (KMSKS) is the 'KMSKS' region element. Residue K560 coordinates ATP. Residues 862–929 (LVDLDALRGR…LARQRLSDLG (68 aa)) adopt a coiled-coil conformation.

It belongs to the class-I aminoacyl-tRNA synthetase family. ValS type 1 subfamily. In terms of assembly, monomer.

The protein localises to the cytoplasm. The catalysed reaction is tRNA(Val) + L-valine + ATP = L-valyl-tRNA(Val) + AMP + diphosphate. In terms of biological role, catalyzes the attachment of valine to tRNA(Val). As ValRS can inadvertently accommodate and process structurally similar amino acids such as threonine, to avoid such errors, it has a 'posttransfer' editing activity that hydrolyzes mischarged Thr-tRNA(Val) in a tRNA-dependent manner. The chain is Valine--tRNA ligase from Prochlorococcus marinus (strain MIT 9313).